The sequence spans 293 residues: Protease HtpX (293 aa).

The next 2 helical transmembrane spans lie at Ile4–Leu24 and Gly34–Ser54. Zn(2+) is bound at residue His139. Glu140 is a catalytic residue. A Zn(2+)-binding site is contributed by His143. 2 helical membrane-spanning segments follow: residues Val158 to Met178 and Leu193 to Ile213. Glu222 provides a ligand contact to Zn(2+).

Belongs to the peptidase M48B family. The cofactor is Zn(2+).

It is found in the cell inner membrane. The chain is Protease HtpX from Escherichia coli O127:H6 (strain E2348/69 / EPEC).